We begin with the raw amino-acid sequence, 525 residues long: 2-isopropylmalate synthase (525 aa).

The Pyruvate carboxyltransferase domain occupies 5 to 267 (VIIFDTTLRD…HTGIHHQEIY (263 aa)). Mn(2+) is bound by residues D14, H202, H204, and N238. Positions 392 to 525 (RLEYFSVQSS…NNSQDMQETV (134 aa)) are regulatory domain.

This sequence belongs to the alpha-IPM synthase/homocitrate synthase family. LeuA type 1 subfamily. In terms of assembly, homodimer. Mn(2+) is required as a cofactor.

It is found in the cytoplasm. It catalyses the reaction 3-methyl-2-oxobutanoate + acetyl-CoA + H2O = (2S)-2-isopropylmalate + CoA + H(+). Its pathway is amino-acid biosynthesis; L-leucine biosynthesis; L-leucine from 3-methyl-2-oxobutanoate: step 1/4. Functionally, catalyzes the condensation of the acetyl group of acetyl-CoA with 3-methyl-2-oxobutanoate (2-ketoisovalerate) to form 3-carboxy-3-hydroxy-4-methylpentanoate (2-isopropylmalate). The polypeptide is 2-isopropylmalate synthase (Sodalis glossinidius (strain morsitans)).